The chain runs to 303 residues: Probable 5-dehydro-4-deoxyglucarate dehydratase (303 aa).

It belongs to the DapA family.

The catalysed reaction is 5-dehydro-4-deoxy-D-glucarate + H(+) = 2,5-dioxopentanoate + CO2 + H2O. The protein operates within carbohydrate acid metabolism; D-glucarate degradation; 2,5-dioxopentanoate from D-glucarate: step 2/2. In Pseudomonas savastanoi pv. phaseolicola (strain 1448A / Race 6) (Pseudomonas syringae pv. phaseolicola (strain 1448A / Race 6)), this protein is Probable 5-dehydro-4-deoxyglucarate dehydratase.